The chain runs to 342 residues: Polygalacturonase inhibitor 3 (342 aa).

A signal peptide spans 1-29 (MTQFNIPVTMSSSLSIILVILVSLRTALS). 2 cysteine pairs are disulfide-bonded: Cys-32-Cys-62 and Cys-63-Cys-72. Asn-64 carries an N-linked (GlcNAc...) asparagine glycan. LRR repeat units follow at residues 82–107 (NNLD…LPYL), 108–132 (NFLY…LTQL), 133–156 (HYLY…IKTL), 157–180 (VTLD…LPNL), 181–205 (VGIT…SKLF), 206–228 (TSMT…NLNL), 229–252 (AFVD…DKNT), 253–275 (QKIH…SKNL), 276–299 (NGLD…LKFL), and 300–319 (HSLN…GGNL). N-linked (GlcNAc...) asparagine glycosylation occurs at Asn-141. Asn-303 carries an N-linked (GlcNAc...) asparagine glycan. Intrachain disulfides connect Cys-310/Cys-332 and Cys-334/Cys-341.

The protein belongs to the polygalacturonase-inhibiting protein family. As to expression, found in suspension-cultured cells and to a lesser extent in hypocotyls, leaves and flowers.

The protein localises to the secreted. Its subcellular location is the cell wall. The protein resides in the membrane. Its function is as follows. Inhibitor of fungal polygalacturonase. It is an important factor for plant resistance to phytopathogenic fungi. The polypeptide is Polygalacturonase inhibitor 3 (PGIP3) (Phaseolus vulgaris (Kidney bean)).